The chain runs to 225 residues: Cytidylate kinase (225 aa).

ATP is bound at residue 11 to 19 (GPAGVGKST).

It belongs to the cytidylate kinase family. Type 1 subfamily.

It localises to the cytoplasm. The enzyme catalyses CMP + ATP = CDP + ADP. It carries out the reaction dCMP + ATP = dCDP + ADP. The chain is Cytidylate kinase from Lawsonia intracellularis (strain PHE/MN1-00).